The following is a 270-amino-acid chain: Methionine-rich protein (270 aa).

The first 18 residues, 1-18 (MLSLWAIGLLGLLNQVEA), serve as a signal peptide directing secretion. Over residues 31 to 52 (QRSAQFSSSGWGTSPAAQNPWS) the composition is skewed to polar residues. Residues 31–95 (QRSAQFSSSG…MPGSMPGAMP (65 aa)) form a disordered region. The span at 56–95 (PMPNTNMPNMNTGSLPGSMPGAMPGSMPGAMPGSMPGAMP) shows a compositional bias: low complexity.

Component of the acid-soluble organic matrix of calcified layers of the shell (at protein level).

The protein localises to the secreted. The chain is Methionine-rich protein from Lottia gigantea (Giant owl limpet).